The primary structure comprises 243 residues: Leucinostatins biosynthesis cluster protein S (243 aa).

Part of the gene cluster that mediates the biosynthesis of the lipopeptide antibiotics leucinostatins that show extensive biological activities, including antimalarial, antiviral, antibacterial, antifungal, and antitumor activities, as well as phytotoxic. The function of lcsS within the leucinostatins biosynthesis has not been identified yet. This chain is Leucinostatins biosynthesis cluster protein S, found in Purpureocillium lilacinum (Paecilomyces lilacinus).